The chain runs to 136 residues: uncharacterized protein (136 aa).

This is an uncharacterized protein from Methanocaldococcus jannaschii (strain ATCC 43067 / DSM 2661 / JAL-1 / JCM 10045 / NBRC 100440) (Methanococcus jannaschii).